We begin with the raw amino-acid sequence, 572 residues long: DnaJ protein ERDJ3A (572 aa).

The N-terminal stretch at 1–23 is a signal peptide; it reads MVRTRLAISVVLVSTLLLLNVKA. Residues 27 to 91 enclose the J domain; sequence DPYKVLGVSK…EKRKNYDLYG (65 aa). A coiled-coil region spans residues 394 to 423; sequence ITVKNLKSAVQELGKLLEGLEKKNKKVSSK. The interval 419–439 is disordered; that stretch reads KVSSKSQAGQAPNESSEKIPL. Residues 422–432 are compositionally biased toward polar residues; the sequence is SKSQAGQAPNE. Residue N431 is glycosylated (N-linked (GlcNAc...) asparagine).

In terms of assembly, interacts with BIP1 and BIP3. The interaction with BIP1 and BIP3 activates the ATPase enzyme activities of BIP1 and BIP3. Post-translationally, not N-glycosylated. Expressed in roots, leaves, stems, flowers, mature pollen grains and growing pollen tubes.

The protein resides in the endoplasmic reticulum lumen. Its function is as follows. Regulates protein folding in the endoplasmic reticulum (ER) lumen. Functions probably as a co-molecular chaperone that is required for normal growth of pollen tubes under high-temperature stress. This chain is DnaJ protein ERDJ3A (ERDJ3A), found in Arabidopsis thaliana (Mouse-ear cress).